A 528-amino-acid polypeptide reads, in one-letter code: MSLNSSLGHRKELSNLTEGASDQGGSGVTEFVAIVIITVFVCLGNLVIVITLYRKSYLLTLSNKFVFSLTLSNFLLSVLVLPFVVTSSIRREWIFGVVWCNFSALLYLLISSASMLTLGIIAVDRYYAVLYPMAYPMKITGNRAVMVLAYIWLHSLIGCLPPLFGWSSVEFDEFKWMCVAAWHREPGYTAFWQIWCALLPFLVMLVCYGFIFRVARVKARKVHCGAVVTVEVGVQRTGRKNSSTSTSSSGSRKSAFQGVVYSANQCKALVTILVVIGAFMVTWGPYMVVITSEALWGKNCVSPTLETWATWLSFTSAICHPLIYGLWNKTVRKELLGMCFGDRYYREPFVQRQRTSRLFSISNRITDLGLSPHLTALMAGEQPLGNSSSTGDTGFSCSQDSGTDVMLLEDYTSDDNPLHGTCPPKRRSSVTFEDEVEQIKEAAKNPILHVKADVHKSLDSYATSLAKAIEAEAKINLFGEEALPGVLLTARTVPGIGFGSRRGSRTLAGQRLQLQSIEEGDVLATEQR.

Over 1-30 the chain is Extracellular; it reads MSLNSSLGHRKELSNLTEGASDQGGSGVTE. Asn4 and Asn15 each carry an N-linked (GlcNAc...) asparagine glycan. Residues 31-51 form a helical membrane-spanning segment; it reads FVAIVIITVFVCLGNLVIVIT. Residues 52-64 are Cytoplasmic-facing; the sequence is LYRKSYLLTLSNK. A helical transmembrane segment spans residues 65 to 85; that stretch reads FVFSLTLSNFLLSVLVLPFVV. Residues 86 to 101 are Extracellular-facing; that stretch reads TSSIRREWIFGVVWCN. An intrachain disulfide couples Cys100 to Cys178. The N-linked (GlcNAc...) asparagine glycan is linked to Asn101. Residues 102–122 form a helical membrane-spanning segment; it reads FSALLYLLISSASMLTLGIIA. The Cytoplasmic portion of the chain corresponds to 123–143; that stretch reads VDRYYAVLYPMAYPMKITGNR. The chain crosses the membrane as a helical span at residues 144–164; that stretch reads AVMVLAYIWLHSLIGCLPPLF. The Extracellular portion of the chain corresponds to 165-190; that stretch reads GWSSVEFDEFKWMCVAAWHREPGYTA. Residues 191-211 traverse the membrane as a helical segment; that stretch reads FWQIWCALLPFLVMLVCYGFI. The Cytoplasmic portion of the chain corresponds to 212-269; the sequence is FRVARVKARKVHCGAVVTVEVGVQRTGRKNSSTSTSSSGSRKSAFQGVVYSANQCKAL. A helical transmembrane segment spans residues 270–290; it reads VTILVVIGAFMVTWGPYMVVI. The Extracellular segment spans residues 291–306; the sequence is TSEALWGKNCVSPTLE. Residues 307-327 form a helical membrane-spanning segment; sequence TWATWLSFTSAICHPLIYGLW. Residues 328–528 are Cytoplasmic-facing; that stretch reads NKTVRKELLG…EGDVLATEQR (201 aa).

This sequence belongs to the G-protein coupled receptor 1 family.

It localises to the cell projection. Its subcellular location is the cilium membrane. It is found in the cell membrane. In terms of biological role, key negative regulator of Shh signaling, which promotes the processing of GLI3 into GLI3R during neural tube development. Recruited by TULP3 and the IFT-A complex to primary cilia and acts as a regulator of the PKA-dependent basal repression machinery in Shh signaling by increasing cAMP levels, leading to promote the PKA-dependent processing of GLI3 into GLI3R and repress the Shh signaling. In presence of SHH, it is removed from primary cilia and is internalized into recycling endosomes, preventing its activity and allowing activation of the Shh signaling. Its ligand is unknown. This Bos taurus (Bovine) protein is G protein-coupled receptor 161 (GPR161).